Reading from the N-terminus, the 306-residue chain is Mycothiol acetyltransferase (306 aa).

N-acetyltransferase domains are found at residues 17 to 163 (VARV…RPMP) and 166 to 306 (LALS…YRRA). Glu-48 provides a ligand contact to 1D-myo-inositol 2-(L-cysteinylamino)-2-deoxy-alpha-D-glucopyranoside. Position 89–91 (89–91 (IVV)) interacts with acetyl-CoA. Glu-192, Lys-232, and Glu-239 together coordinate 1D-myo-inositol 2-(L-cysteinylamino)-2-deoxy-alpha-D-glucopyranoside. Acetyl-CoA-binding positions include 243–245 (LGV) and 250–256 (AARGLGS). Residue Tyr-277 participates in 1D-myo-inositol 2-(L-cysteinylamino)-2-deoxy-alpha-D-glucopyranoside binding.

Belongs to the acetyltransferase family. MshD subfamily. In terms of assembly, monomer.

The catalysed reaction is 1D-myo-inositol 2-(L-cysteinylamino)-2-deoxy-alpha-D-glucopyranoside + acetyl-CoA = mycothiol + CoA + H(+). In terms of biological role, catalyzes the transfer of acetyl from acetyl-CoA to desacetylmycothiol (Cys-GlcN-Ins) to form mycothiol. This is Mycothiol acetyltransferase from Clavibacter michiganensis subsp. michiganensis (strain NCPPB 382).